The sequence spans 215 residues: Elongation factor Ts (215 aa).

The interval 80-83 (TDFV) is involved in Mg(2+) ion dislocation from EF-Tu.

Belongs to the EF-Ts family.

Its subcellular location is the cytoplasm. In terms of biological role, associates with the EF-Tu.GDP complex and induces the exchange of GDP to GTP. It remains bound to the aminoacyl-tRNA.EF-Tu.GTP complex up to the GTP hydrolysis stage on the ribosome. This is Elongation factor Ts from Heliobacterium modesticaldum (strain ATCC 51547 / Ice1).